The sequence spans 621 residues: Autonomous transposable element EN-1 mosaic protein (621 aa).

Disordered regions lie at residues 1–119, 428–447, 498–530, and 549–621; these read MFRM…PPRR, YTRRSNFSAGSNRPRRPSAR, QQPPIITHPVSGQSSDRSTAAADGSQGSATSVQ, and RQPG…PPTE. 2 stretches are compositionally biased toward polar residues: residues 27–39 and 47–61; these read EGTTTSRSRQEQL and RGSSGPSNTEGTTSR. Acidic residues predominate over residues 82–102; that stretch reads AAVDAEAEEAAAELDDGEETS. Low complexity predominate over residues 570–594; the sequence is PPRGQSQSPGLPSHSPGSGSGSHHA.

In terms of biological role, this protein has most probably three functions; the mutator (M) function, for excision and transposition; the suppressor (S) function, which inhibits residual gene activity of certain alleles in which inhibitor elements are integrated; an activator (A) function is proposed, because inactive SPM can be activated by a second SPM. This is Autonomous transposable element EN-1 mosaic protein from Zea mays (Maize).